Reading from the N-terminus, the 130-residue chain is Small ribosomal subunit protein uS11 (130 aa).

It belongs to the universal ribosomal protein uS11 family. As to quaternary structure, part of the 30S ribosomal subunit. Interacts with proteins S7 and S18. Binds to IF-3.

Located on the platform of the 30S subunit, it bridges several disparate RNA helices of the 16S rRNA. Forms part of the Shine-Dalgarno cleft in the 70S ribosome. The chain is Small ribosomal subunit protein uS11 from Xylella fastidiosa (strain 9a5c).